Consider the following 284-residue polypeptide: Nucleotide-binding protein Sden_0486 (284 aa).

ATP is bound at residue G8 to S15. GTP is bound at residue D56–N59.

The protein belongs to the RapZ-like family.

In terms of biological role, displays ATPase and GTPase activities. In Shewanella denitrificans (strain OS217 / ATCC BAA-1090 / DSM 15013), this protein is Nucleotide-binding protein Sden_0486.